The sequence spans 212 residues: Large ribosomal subunit protein uL3 (212 aa).

Residues 136 to 155 (THGNSLSHRSNGSIGQNQTP) show a composition bias toward polar residues. The segment at 136–157 (THGNSLSHRSNGSIGQNQTPGR) is disordered. N5-methylglutamine is present on Q153.

Belongs to the universal ribosomal protein uL3 family. In terms of assembly, part of the 50S ribosomal subunit. Forms a cluster with proteins L14 and L19. Post-translationally, methylated by PrmB.

Its function is as follows. One of the primary rRNA binding proteins, it binds directly near the 3'-end of the 23S rRNA, where it nucleates assembly of the 50S subunit. The sequence is that of Large ribosomal subunit protein uL3 from Shewanella putrefaciens (strain CN-32 / ATCC BAA-453).